The chain runs to 408 residues: Acetate kinase (408 aa).

A Mg(2+)-binding site is contributed by Asn-7. Lys-14 is an ATP binding site. Substrate is bound at residue Arg-91. Catalysis depends on Asp-148, which acts as the Proton donor/acceptor. ATP contacts are provided by residues 208-212 (HLGNG), 283-285 (DFR), and 331-335 (GIGEN). Glu-384 serves as a coordination point for Mg(2+).

Belongs to the acetokinase family. Homodimer. The cofactor is Mg(2+). It depends on Mn(2+) as a cofactor.

It is found in the cytoplasm. The catalysed reaction is acetate + ATP = acetyl phosphate + ADP. It functions in the pathway metabolic intermediate biosynthesis; acetyl-CoA biosynthesis; acetyl-CoA from acetate: step 1/2. Its function is as follows. Catalyzes the formation of acetyl phosphate from acetate and ATP. Can also catalyze the reverse reaction. This Methanosarcina mazei (Methanosarcina frisia) protein is Acetate kinase.